Consider the following 175-residue polypeptide: Capsid protein (175 aa).

A disordered region spans residues 1–35; it reads MFRQEMARYPKKSIKKRRVGRRKYGSKAATSHDYS. Residues 9 to 25 show a composition bias toward basic residues; it reads YPKKSIKKRRVGRRKYG.

It belongs to the nanoviridae capsid protein family.

It is found in the virion. This is Capsid protein (DNA-S) from Musa (BBTV).